A 305-amino-acid chain; its full sequence is Ornithine carbamoyltransferase, catabolic (305 aa).

Carbamoyl phosphate-binding positions include 50 to 53 (STRT), glutamine 77, arginine 101, and 128 to 131 (HPLQ). Residues asparagine 159, aspartate 223, and 227–228 (SM) each bind L-ornithine. Residues 263–264 (CL) and arginine 291 each bind carbamoyl phosphate.

It belongs to the aspartate/ornithine carbamoyltransferase superfamily. OTCase family.

Its subcellular location is the cytoplasm. It catalyses the reaction carbamoyl phosphate + L-ornithine = L-citrulline + phosphate + H(+). It participates in amino-acid degradation; L-arginine degradation via ADI pathway; carbamoyl phosphate from L-arginine: step 2/2. Its function is as follows. Reversibly catalyzes the transfer of the carbamoyl group from carbamoyl phosphate (CP) to the N(epsilon) atom of ornithine (ORN) to produce L-citrulline. The sequence is that of Ornithine carbamoyltransferase, catabolic from Thermoplasma acidophilum (strain ATCC 25905 / DSM 1728 / JCM 9062 / NBRC 15155 / AMRC-C165).